The following is a 211-amino-acid chain: Ras-related protein rab-11.1 (211 aa).

18 to 26 (GDSGVGKSN) lines the GTP pocket. Residues 40-48 (SKSTIGVEF) carry the Effector region motif. Residues 66 to 70 (DTAGQ), 124 to 127 (NKSD), and 154 to 156 (SAL) contribute to the GTP site. Residues 187 to 211 (GYGGGSGTIIPSPASDPPKKQCCIP) are disordered. S-geranylgeranyl cysteine attachment occurs at residues cysteine 208 and cysteine 209.

This sequence belongs to the small GTPase superfamily. Rab family. In terms of assembly, interacts with rei-1 and rei-2. The GDP-form preferentially binds to rei-1 and rei-2. Expressed weakly in sperm, but more predominantly in oocytes. Expressed in the intestine.

Its subcellular location is the cytoplasmic vesicle. The protein localises to the secretory vesicle. It is found in the endosome. The protein resides in the cytoplasm. It localises to the cytoskeleton. Its subcellular location is the spindle. The protein localises to the microtubule organizing center. It is found in the spindle pole body. The protein resides in the centrosome. It localises to the apical cell membrane. Its subcellular location is the cytosol. The protein localises to the recycling endosome membrane. It is found in the golgi apparatus membrane. The protein resides in the cytoplasmic granule. Its function is as follows. The small GTPases Rab are key regulators of intracellular membrane trafficking, from the formation of transport vesicles to their fusion with membranes. Rabs cycle between an inactive GDP-bound form and an active GTP-bound form that is able to recruit to membranes different set of downstream effectors directly responsible for vesicle formation, movement, tethering and fusion. Involved in regulating the meiotic maturation of oocytes. Plays a role in egg shell formation, regulating exocytosis of chondroitin proteoglycans following fertilization. Controls cortical granule localization and targets them to the plasma membrane for exocytosis. Acts as a major regulator of membrane delivery during cytokinesis. Regulates the cytoskeleton by facilitating astral microtubule elongation and organization during metaphase to ensure proper spindle alignment and polarity in the first embryonic cell division. Maintains normal endoplasmic reticulum morphology during metaphase. Involved in vesicle formation and plasma membrane repair following exposure to pore forming toxins. Regulates endocytic recycling. May play a role in yolk receptor endocytosis in growing oocytes. Plays a role in the shedding of pathogen spores from intestinal cells via its involvement in spore fusion and endocytic trafficking. The polypeptide is Ras-related protein rab-11.1 (Caenorhabditis elegans).